The chain runs to 126 residues: Large ribosomal subunit protein bL12 (126 aa).

The protein belongs to the bacterial ribosomal protein bL12 family. In terms of assembly, homodimer. Part of the ribosomal stalk of the 50S ribosomal subunit. Forms a multimeric L10(L12)X complex, where L10 forms an elongated spine to which 2 to 4 L12 dimers bind in a sequential fashion. Binds GTP-bound translation factors.

Forms part of the ribosomal stalk which helps the ribosome interact with GTP-bound translation factors. Is thus essential for accurate translation. This is Large ribosomal subunit protein bL12 from Acidovorax sp. (strain JS42).